The sequence spans 220 residues: Probable transaldolase (220 aa).

The active-site Schiff-base intermediate with substrate is K87.

It belongs to the transaldolase family. Type 3B subfamily.

Its subcellular location is the cytoplasm. The enzyme catalyses D-sedoheptulose 7-phosphate + D-glyceraldehyde 3-phosphate = D-erythrose 4-phosphate + beta-D-fructose 6-phosphate. It participates in carbohydrate degradation; pentose phosphate pathway; D-glyceraldehyde 3-phosphate and beta-D-fructose 6-phosphate from D-ribose 5-phosphate and D-xylulose 5-phosphate (non-oxidative stage): step 2/3. Its function is as follows. Transaldolase is important for the balance of metabolites in the pentose-phosphate pathway. This chain is Probable transaldolase, found in Porphyromonas gingivalis (strain ATCC 33277 / DSM 20709 / CIP 103683 / JCM 12257 / NCTC 11834 / 2561).